Consider the following 173-residue polypeptide: Crossover junction endodeoxyribonuclease RuvC (173 aa).

Active-site residues include Asp8, Glu67, and Asp139. Positions 8, 67, and 139 each coordinate Mg(2+).

This sequence belongs to the RuvC family. In terms of assembly, homodimer which binds Holliday junction (HJ) DNA. The HJ becomes 2-fold symmetrical on binding to RuvC with unstacked arms; it has a different conformation from HJ DNA in complex with RuvA. In the full resolvosome a probable DNA-RuvA(4)-RuvB(12)-RuvC(2) complex forms which resolves the HJ. It depends on Mg(2+) as a cofactor.

It is found in the cytoplasm. The enzyme catalyses Endonucleolytic cleavage at a junction such as a reciprocal single-stranded crossover between two homologous DNA duplexes (Holliday junction).. Its function is as follows. The RuvA-RuvB-RuvC complex processes Holliday junction (HJ) DNA during genetic recombination and DNA repair. Endonuclease that resolves HJ intermediates. Cleaves cruciform DNA by making single-stranded nicks across the HJ at symmetrical positions within the homologous arms, yielding a 5'-phosphate and a 3'-hydroxyl group; requires a central core of homology in the junction. The consensus cleavage sequence is 5'-(A/T)TT(C/G)-3'. Cleavage occurs on the 3'-side of the TT dinucleotide at the point of strand exchange. HJ branch migration catalyzed by RuvA-RuvB allows RuvC to scan DNA until it finds its consensus sequence, where it cleaves and resolves the cruciform DNA. In Photorhabdus laumondii subsp. laumondii (strain DSM 15139 / CIP 105565 / TT01) (Photorhabdus luminescens subsp. laumondii), this protein is Crossover junction endodeoxyribonuclease RuvC.